Here is a 289-residue protein sequence, read N- to C-terminus: 3-methyl-2-oxobutanoate hydroxymethyltransferase (289 aa).

Mg(2+) contacts are provided by Asp58 and Asp99. Residues 58 to 59 (DS), Asp99, and Lys128 each bind 3-methyl-2-oxobutanoate. Position 130 (Glu130) interacts with Mg(2+). Residue Glu197 is the Proton acceptor of the active site.

It belongs to the PanB family. As to quaternary structure, homodecamer; pentamer of dimers. Requires Mg(2+) as cofactor.

The protein localises to the cytoplasm. The catalysed reaction is 3-methyl-2-oxobutanoate + (6R)-5,10-methylene-5,6,7,8-tetrahydrofolate + H2O = 2-dehydropantoate + (6S)-5,6,7,8-tetrahydrofolate. It participates in cofactor biosynthesis; (R)-pantothenate biosynthesis; (R)-pantoate from 3-methyl-2-oxobutanoate: step 1/2. Its function is as follows. Catalyzes the reversible reaction in which hydroxymethyl group from 5,10-methylenetetrahydrofolate is transferred onto alpha-ketoisovalerate to form ketopantoate. The protein is 3-methyl-2-oxobutanoate hydroxymethyltransferase of Leptothrix cholodnii (strain ATCC 51168 / LMG 8142 / SP-6) (Leptothrix discophora (strain SP-6)).